Reading from the N-terminus, the 349-residue chain is tRNA uridine(34) hydroxylase (349 aa).

Residues 146–240 enclose the Rhodanese domain; sequence DDPDAVFIDM…YARKAREQGL (95 aa). C200 acts as the Cysteine persulfide intermediate in catalysis. Positions 314-328 are enriched in basic and acidic residues; the sequence is PEEEQRRRRAGRENG. Residues 314–349 are disordered; the sequence is PEEEQRRRRAGRENGNKIFNKSRGRLNTTLGIPDPE.

The protein belongs to the TrhO family.

It catalyses the reaction uridine(34) in tRNA + AH2 + O2 = 5-hydroxyuridine(34) in tRNA + A + H2O. Its function is as follows. Catalyzes oxygen-dependent 5-hydroxyuridine (ho5U) modification at position 34 in tRNAs. This Cronobacter sakazakii (strain ATCC BAA-894) (Enterobacter sakazakii) protein is tRNA uridine(34) hydroxylase.